The chain runs to 421 residues: CinA-like protein (421 aa).

This sequence belongs to the CinA family.

This is CinA-like protein from Mycobacterium sp. (strain JLS).